A 1099-amino-acid chain; its full sequence is Protein DDB_G0287365 (1099 aa).

Positions 1–24 (MMSFNLILILIIFLILIQNYVIDG) are cleaved as a signal peptide. The G8 domain occupies 47–174 (KSWKKLKLPI…TKTTWTKLIS (128 aa)). N-linked (GlcNAc...) asparagine glycosylation is found at N62, N137, N664, N764, and N858.

This sequence belongs to the CEMIP family.

The sequence is that of Protein DDB_G0287365 from Dictyostelium discoideum (Social amoeba).